The following is a 479-amino-acid chain: Ribosomal RNA small subunit methyltransferase F (479 aa).

S-adenosyl-L-methionine-binding positions include 125 to 131 (AAAPGSK), Glu149, Asp176, and Asp194. Catalysis depends on Cys247, which acts as the Nucleophile.

This sequence belongs to the class I-like SAM-binding methyltransferase superfamily. RsmB/NOP family.

The protein resides in the cytoplasm. The enzyme catalyses cytidine(1407) in 16S rRNA + S-adenosyl-L-methionine = 5-methylcytidine(1407) in 16S rRNA + S-adenosyl-L-homocysteine + H(+). In terms of biological role, specifically methylates the cytosine at position 1407 (m5C1407) of 16S rRNA. This Escherichia coli (strain UTI89 / UPEC) protein is Ribosomal RNA small subunit methyltransferase F.